We begin with the raw amino-acid sequence, 189 residues long: Dynactin subunit 6 (189 aa).

The protein belongs to the dynactin subunits 5/6 family. Dynactin subunit 6 subfamily. As to quaternary structure, subunit of dynactin, a multiprotein complex part of a tripartite complex with dynein and a adapter, such as BICDL1, BICD2 or HOOK3. The dynactin complex is built around ACTR1A/ACTB filament and consists of an actin-related filament composed of a shoulder domain, a pointed end and a barbed end.

Its subcellular location is the cytoplasm. The protein resides in the cytoskeleton. In terms of biological role, part of the dynactin complex that activates the molecular motor dynein for ultra-processive transport along microtubules. In Dictyostelium discoideum (Social amoeba), this protein is Dynactin subunit 6 (dynF).